The chain runs to 126 residues: Large ribosomal subunit protein bL12 (126 aa).

It belongs to the bacterial ribosomal protein bL12 family. In terms of assembly, homodimer. Part of the ribosomal stalk of the 50S ribosomal subunit. Forms a multimeric L10(L12)X complex, where L10 forms an elongated spine to which 2 to 4 L12 dimers bind in a sequential fashion. Binds GTP-bound translation factors.

Forms part of the ribosomal stalk which helps the ribosome interact with GTP-bound translation factors. Is thus essential for accurate translation. This is Large ribosomal subunit protein bL12 from Methylobacterium nodulans (strain LMG 21967 / CNCM I-2342 / ORS 2060).